A 138-amino-acid polypeptide reads, in one-letter code: Small ribosomal subunit protein uS11 (138 aa).

The segment covering 1-12 (MAPKKPGAAGPK) has biased composition (low complexity). Disordered stretches follow at residues 1–27 (MAPKKPGAAGPKKAQKTRRREKKNVPH) and 119–138 (ISDVTPQPHNGCRPPKRRRV). Basic residues predominate over residues 13–22 (KAQKTRRREK).

The protein belongs to the universal ribosomal protein uS11 family. As to quaternary structure, part of the 30S ribosomal subunit. Interacts with proteins S7 and S18. Binds to IF-3.

Its function is as follows. Located on the platform of the 30S subunit, it bridges several disparate RNA helices of the 16S rRNA. Forms part of the Shine-Dalgarno cleft in the 70S ribosome. The polypeptide is Small ribosomal subunit protein uS11 (Mycobacteroides abscessus (strain ATCC 19977 / DSM 44196 / CCUG 20993 / CIP 104536 / JCM 13569 / NCTC 13031 / TMC 1543 / L948) (Mycobacterium abscessus)).